The following is a 532-amino-acid chain: Glucose-6-phosphate isomerase (532 aa).

The active-site Proton donor is Glu322. Residues His351 and Lys457 contribute to the active site.

Belongs to the GPI family.

It is found in the cytoplasm. The catalysed reaction is alpha-D-glucose 6-phosphate = beta-D-fructose 6-phosphate. It participates in carbohydrate biosynthesis; gluconeogenesis. It functions in the pathway carbohydrate degradation; glycolysis; D-glyceraldehyde 3-phosphate and glycerone phosphate from D-glucose: step 2/4. In terms of biological role, catalyzes the reversible isomerization of glucose-6-phosphate to fructose-6-phosphate. This chain is Glucose-6-phosphate isomerase, found in Synechococcus sp. (strain JA-3-3Ab) (Cyanobacteria bacterium Yellowstone A-Prime).